Reading from the N-terminus, the 544-residue chain is Probable protein kinase UbiB (544 aa).

The Protein kinase domain maps to Glu123–Ser505. Residues Leu129–Val137 and Lys156 each bind ATP. The active-site Proton acceptor is Asp291. The chain crosses the membrane as a helical span at residues Leu522–Leu540.

It belongs to the ABC1 family. UbiB subfamily.

It localises to the cell inner membrane. The protein operates within cofactor biosynthesis; ubiquinone biosynthesis [regulation]. In terms of biological role, is probably a protein kinase regulator of UbiI activity which is involved in aerobic coenzyme Q (ubiquinone) biosynthesis. This chain is Probable protein kinase UbiB, found in Actinobacillus pleuropneumoniae serotype 5b (strain L20).